Consider the following 91-residue polypeptide: Sm-like protein LSM36B (91 aa).

Residues 14–86 enclose the Sm domain; it reads TPADFLKSIR…VLYISTTKGT (73 aa).

It belongs to the snRNP Sm proteins family. As to quaternary structure, component of the heptameric LSM1-LSM7 complex that forms a seven-membered ring structure with a donut shape. The LSM subunits are arranged in the order LSM1, LSM2, LSM3, LSM6, LSM5, LSM7 and LSM4. Component of the heptameric LSM2-LSM8 complex that forms a seven-membered ring structure with a donut shape. The LSM subunits are arranged in the order LSM8, LSM2, LSM3, LSM6, LSM5, LSM7 and LSM4. LSM6B subunit interacts only with its two neighboring subunits, LSM3A or LSM3B and LSM5. Expressed in roots, leaves, stems, flowers and siliques.

The protein localises to the cytoplasm. It is found in the nucleus. Its function is as follows. Component of LSM protein complexes, which are involved in RNA processing. Component of the cytoplasmic LSM1-LSM7 complex which is involved in mRNA degradation by promoting decapping and leading to accurate 5'-3' mRNA decay. The cytoplasmic LSM1-LSM7 complex regulates developmental gene expression by the decapping of specific development-related transcripts. Component of the nuclear LSM2-LSM8 complex which is involved splicing nuclear mRNAs. LSM2-LSM8 binds directly to the U6 small nuclear RNAs (snRNAs) and is essential for accurate splicing of selected development-related mRNAs through the stabilization of the spliceosomal U6 snRNA. Plays a critical role in the regulation of development-related gene expression. This is Sm-like protein LSM36B from Arabidopsis thaliana (Mouse-ear cress).